A 199-amino-acid polypeptide reads, in one-letter code: FMN-dependent NADH:quinone oxidoreductase (199 aa).

FMN-binding positions include Ser9, 15–17 (SNS), and 95–98 (MYNF).

This sequence belongs to the azoreductase type 1 family. As to quaternary structure, homodimer. FMN is required as a cofactor.

The enzyme catalyses 2 a quinone + NADH + H(+) = 2 a 1,4-benzosemiquinone + NAD(+). It carries out the reaction N,N-dimethyl-1,4-phenylenediamine + anthranilate + 2 NAD(+) = 2-(4-dimethylaminophenyl)diazenylbenzoate + 2 NADH + 2 H(+). Its function is as follows. Quinone reductase that provides resistance to thiol-specific stress caused by electrophilic quinones. In terms of biological role, also exhibits azoreductase activity. Catalyzes the reductive cleavage of the azo bond in aromatic azo compounds to the corresponding amines. The sequence is that of FMN-dependent NADH:quinone oxidoreductase from Aromatoleum aromaticum (strain DSM 19018 / LMG 30748 / EbN1) (Azoarcus sp. (strain EbN1)).